An 892-amino-acid polypeptide reads, in one-letter code: MDHYDSQQTNDYMQPEEDWDRDLLLDPAWEKQQRKTFTAWCNSHLRKAGTQIENIEEDFRDGLKLMLLLEVISGERLAKPERGKMRVHKISNVNKALDFIASKGVKLVSIGAEEIVDGNVKMTLGMIWTIILRFAIQDISVEETSAKEGLLLWCQRKTAPYKNVNIQNFHISWKDGLGFCALIHRHRPELIDYGKLRKDDPLTNLNTAFDVAEKYLDIPKMLDAEDIVGTARPDEKAIMTYVSSFYHAFSGAQKAETAANRICKVLAVNQENEQLMEDYEKLASDLLEWIRRTIPWLENRVPENTMHAMQQKLEDFRDYRRLHKPPKVQEKCQLEINFNTLQTKLRLSNRPAFMPSEGRMVSDINNAWGCLEQVEKGYEEWLLNEIRRLERLDHLAEKFRQKASIHEAWTDGKEAMLRQKDYETATLSEIKALLKKHEAFESDLAAHQDRVEQIAAIAQELNELDYYDSPSVNARCQKICDQWDNLGALTQKRREALERTEKLLETIDQLYLEYAKRAAPFNNWMEGAMEDLQDTFIVHTIEEIQGLTTAHEQFKATLPDADKERLAILGIHNEVSKIVQTYHVNMAGTNPYTTITPQEINGKWDHVRQLVPRRDQALTEEHARQQHNERLRKQFGAQANVIGPWIQTKMEEIGRISIEMHGTLEDQLSHLRQYEKSIVNYKPKIDQLEGDHQLIQEALIFDNKHTNYTMEHIRVGWEQLLTTIARTINEVENQILTRDAKGISQEQMNEFRASFNHFDRDHSGTLGPEEFKACLISLGYDIGNDPQGEAEFARIMSIVDPNRLGVVTFQAFIDFMSRETADTDTADQVMASFKILAGDKNYITMDELRRELPPDQAEYCIARMAPYTGPDSVPGALDYMSFSTALYGESDL.

N-acetylmethionine is present on Met1. The tract at residues 1–247 (MDHYDSQQTN…IMTYVSSFYH (247 aa)) is actin-binding. Phosphoserine is present on Ser6. At Tyr12 the chain carries Phosphotyrosine; by FAK1. Calponin-homology (CH) domains follow at residues 31-135 (KQQR…LRFA) and 144-250 (TSAK…HAFS). 2 positions are modified to N6-acetyllysine: Lys95 and Lys195. 4 Spectrin repeats span residues 274–384 (QLME…WLLN), 394–499 (HLAE…ALER), 509–620 (QLYL…ALTE), and 630–733 (RLRK…EVEN). Residues 274-733 (QLMEDYEKLA…IARTINEVEN (460 aa)) form an interaction with DDN region. Ser471 bears the Phosphoserine mark. Lys676 carries the post-translational modification N6-acetyllysine. The residue at position 677 (Ser677) is a Phosphoserine. 2 consecutive EF-hand domains span residues 746–781 (EQMNEFRASFNHFDRDHSGTLGPEEFKACLISLGYD) and 787–822 (QGEAEFARIMSIVDPNRLGVVTFQAFIDFMSRETAD). The Ca(2+) site is built by Asp759, Asp761, Ser763, Thr765, and Glu770. The residue at position 890 (Ser890) is a Phosphoserine.

It belongs to the alpha-actinin family. As to quaternary structure, homodimer; antiparallel. Interacts with MYOZ2, TTID and LPP. Interacts with DDN. Interacts with PSD. Interacts with MICALL2. Interacts with DNM2 and CTTN. Interacts with PDLIM1. Interacts with PDLIM2. Interacts with PDLIM4 (via PDZ domain). Interacts with IGSF8.

The protein resides in the cytoplasm. Its subcellular location is the cytoskeleton. It is found in the myofibril. It localises to the sarcomere. The protein localises to the z line. The protein resides in the cell membrane. Its subcellular location is the cell junction. It is found in the cell projection. It localises to the ruffle. In terms of biological role, F-actin cross-linking protein which is thought to anchor actin to a variety of intracellular structures. Association with IGSF8 regulates the immune synapse formation and is required for efficient T-cell activation. This is Alpha-actinin-1 (ACTN1) from Homo sapiens (Human).